A 208-amino-acid polypeptide reads, in one-letter code: Calaxin (208 aa).

EF-hand domains are found at residues 64–99 (TDDM…FLHG), 100–135 (TLEE…SLLK), and 145–180 (GVKD…ENLL). Positions 77, 79, 81, 113, 115, 117, 119, 124, 158, 160, 162, 164, and 169 each coordinate Ca(2+).

Component of the outer dynein arm-docking complex along with ODAD1, ODAD2, ODAD3 and ODAD4.

The protein resides in the cytoplasm. It is found in the cytoskeleton. The protein localises to the cilium axoneme. It localises to the cell projection. Its subcellular location is the cilium. The protein resides in the flagellum. Functionally, component of the outer dynein arm-docking complex (ODA-DC) that mediates outer dynein arms (ODA) binding onto the doublet microtubule. Seems to regulate the assembly of both ODAs and their axonemal docking complex onto ciliary microtubules. Regulates ciliary and flagellar motility and is required for cilia-driven determination of body laterality. This Xenopus laevis (African clawed frog) protein is Calaxin (clxn).